The chain runs to 155 residues: Ribonuclease H (155 aa).

One can recognise an RNase H type-1 domain in the interval 4-145; the sequence is ETKVIEIYTD…ADALARKAIT (142 aa). Positions 13, 51, 73, and 137 each coordinate Mg(2+).

Belongs to the RNase H family. As to quaternary structure, monomer. The cofactor is Mg(2+).

The protein localises to the cytoplasm. It catalyses the reaction Endonucleolytic cleavage to 5'-phosphomonoester.. Its function is as follows. Endonuclease that specifically degrades the RNA of RNA-DNA hybrids. This chain is Ribonuclease H, found in Bartonella bacilliformis (strain ATCC 35685 / KC583 / Herrer 020/F12,63).